Here is a 224-residue protein sequence, read N- to C-terminus: Orotate phosphoribosyltransferase (224 aa).

5-phospho-alpha-D-ribose 1-diphosphate is bound by residues Lys-26, 73–74 (YK), Arg-100, Lys-101, Lys-104, His-106, and 127–135 (EDVTTAGTS). 2 residues coordinate orotate: Thr-131 and Arg-160.

The protein belongs to the purine/pyrimidine phosphoribosyltransferase family. PyrE subfamily. As to quaternary structure, homodimer. Mg(2+) is required as a cofactor.

The enzyme catalyses orotidine 5'-phosphate + diphosphate = orotate + 5-phospho-alpha-D-ribose 1-diphosphate. Its pathway is pyrimidine metabolism; UMP biosynthesis via de novo pathway; UMP from orotate: step 1/2. In terms of biological role, catalyzes the transfer of a ribosyl phosphate group from 5-phosphoribose 1-diphosphate to orotate, leading to the formation of orotidine monophosphate (OMP). The chain is Orotate phosphoribosyltransferase from Clostridium acetobutylicum (strain ATCC 824 / DSM 792 / JCM 1419 / IAM 19013 / LMG 5710 / NBRC 13948 / NRRL B-527 / VKM B-1787 / 2291 / W).